The following is a 195-amino-acid chain: Glycerol-3-phosphate acyltransferase 2 (195 aa).

A run of 6 helical transmembrane segments spans residues 4-24 (VVSL…VAGV), 52-72 (GAAA…VGLA), 73-93 (LWLA…GVVF), 115-135 (AMLV…LALI), 150-170 (AIPF…SRLG), and 171-191 (GGAE…HLLA).

This sequence belongs to the PlsY family. In terms of assembly, probably interacts with PlsX.

Its subcellular location is the cell membrane. It carries out the reaction an acyl phosphate + sn-glycerol 3-phosphate = a 1-acyl-sn-glycero-3-phosphate + phosphate. The protein operates within lipid metabolism; phospholipid metabolism. In terms of biological role, catalyzes the transfer of an acyl group from acyl-phosphate (acyl-PO(4)) to glycerol-3-phosphate (G3P) to form lysophosphatidic acid (LPA). This enzyme utilizes acyl-phosphate as fatty acyl donor, but not acyl-CoA or acyl-ACP. This Deinococcus radiodurans (strain ATCC 13939 / DSM 20539 / JCM 16871 / CCUG 27074 / LMG 4051 / NBRC 15346 / NCIMB 9279 / VKM B-1422 / R1) protein is Glycerol-3-phosphate acyltransferase 2.